Here is a 301-residue protein sequence, read N- to C-terminus: Protoheme IX farnesyltransferase 1 (301 aa).

9 consecutive transmembrane segments (helical) span residues 29–49 (VVAL…PHAV), 51–71 (VQPL…AAAL), 101–121 (ALIF…SLVN), 123–143 (LTAW…TAYL), 150–170 (NIVI…TAVT), 177–197 (ALLL…ALAI), 223–243 (CILL…LVGM), 244–264 (CGPV…YKAW), and 274–294 (LAMQ…MALL).

The protein belongs to the UbiA prenyltransferase family. Protoheme IX farnesyltransferase subfamily.

The protein resides in the cell inner membrane. The enzyme catalyses heme b + (2E,6E)-farnesyl diphosphate + H2O = Fe(II)-heme o + diphosphate. Its pathway is porphyrin-containing compound metabolism; heme O biosynthesis; heme O from protoheme: step 1/1. Converts heme B (protoheme IX) to heme O by substitution of the vinyl group on carbon 2 of heme B porphyrin ring with a hydroxyethyl farnesyl side group. The chain is Protoheme IX farnesyltransferase 1 from Shewanella baltica (strain OS195).